The primary structure comprises 62 residues: Photosystem II reaction center protein Z (62 aa).

The next 2 helical transmembrane spans lie at 8 to 28 and 41 to 61; these read LVSI…VILV and YASA…NSFV.

This sequence belongs to the PsbZ family. In terms of assembly, PSII is composed of 1 copy each of membrane proteins PsbA, PsbB, PsbC, PsbD, PsbE, PsbF, PsbH, PsbI, PsbJ, PsbK, PsbL, PsbM, PsbT, PsbX, PsbY, PsbZ, Psb30/Ycf12, at least 3 peripheral proteins of the oxygen-evolving complex and a large number of cofactors. It forms dimeric complexes.

Its subcellular location is the plastid. The protein resides in the chloroplast thylakoid membrane. Its function is as follows. May control the interaction of photosystem II (PSII) cores with the light-harvesting antenna, regulates electron flow through the 2 photosystem reaction centers. PSII is a light-driven water plastoquinone oxidoreductase, using light energy to abstract electrons from H(2)O, generating a proton gradient subsequently used for ATP formation. The chain is Photosystem II reaction center protein Z from Guillardia theta (Cryptophyte).